We begin with the raw amino-acid sequence, 315 residues long: Protein TIFY 4B (315 aa).

Positions 113–145 are disordered; that stretch reads CHRRDSPRSAEFSGSSGQFVADKDSHKTVSVSP. In terms of domain architecture, Tify spans 151 to 186; it reads TNAVVGQMTIFYSGKVNVYDGVPPEKARSIMHFAAN. The Jas signature appears at 233 to 260; that stretch reads QANRKVSLQRYLEKRKDRRFSKTKKAPG. Residues 235-242 carry the Nuclear localization signal motif; it reads NRKVSLQR. Positions 248–257 are enriched in basic residues; that stretch reads KDRRFSKTKK. Residues 248–315 are disordered; that stretch reads KDRRFSKTKK…LNSDLNSEDN (68 aa). Positions 293–315 are enriched in polar residues; sequence PENQTKSPNISVDLNSDLNSEDN.

This sequence belongs to the TIFY/JAZ family. As to quaternary structure, interacts with AFPH2/NINJA.

The protein resides in the nucleus. Functionally, regulates the arrest of dispersed meristematic cells during lamina development. The polypeptide is Protein TIFY 4B (TIFY4B) (Arabidopsis thaliana (Mouse-ear cress)).